The sequence spans 834 residues: ATP-dependent DNA helicase fml1 (834 aa).

A Helicase ATP-binding domain is found at 80–248 (IVQKALFENV…NVIDSLHISR (169 aa)). ATP is bound at residue 93 to 100 (LPTGLGKT). The DEAH box signature appears at 196 to 199 (DEAH). Residues 416 to 582 (HLERIVTEYF…GLSLSEKSYR (167 aa)) form the Helicase C-terminal domain. Positions 650-690 (EESPFEICPVTYSIEQEKKLEKYKRVCLRGLDIHRNRRLSQ) are interaction with MHF complex. Positions 738–769 (NSTDRDTKQPKMHDFRQPLHPNPMTTLKRKGQ) are disordered. Residues 740-754 (TDRDTKQPKMHDFRQ) are compositionally biased toward basic and acidic residues.

It belongs to the DEAD box helicase family. DEAH subfamily. FANCM sub-subfamily.

It localises to the cytoplasm. The protein resides in the nucleus. The protein localises to the nucleolus. It carries out the reaction ATP + H2O = ADP + phosphate + H(+). In terms of biological role, ATP-dependent DNA helicase involved in DNA damage repair by homologous recombination and in genome maintenance. Capable of unwinding D-loops. Plays a role in limiting crossover recombination during mitotic DNA double-strand break (DSB) repair. Component of a FANCM-MHF complex which promotes gene conversion at blocked replication forks, probably by reversal of the stalled fork. FANCM-MHF also promotes non-crossover recombination in meiotic cells. This Schizosaccharomyces pombe (strain 972 / ATCC 24843) (Fission yeast) protein is ATP-dependent DNA helicase fml1.